The following is a 382-amino-acid chain: Farnesyl diphosphate synthase (382 aa).

Isopentenyl diphosphate is bound by residues Lys81, Arg84, and Gln120. Asp127 and Asp131 together coordinate Mg(2+). Arg136 contributes to the dimethylallyl diphosphate binding site. Isopentenyl diphosphate is bound at residue Arg137. 5 residues coordinate dimethylallyl diphosphate: Lys230, Thr231, Gln270, Lys287, and Lys296.

Belongs to the FPP/GGPP synthase family. The cofactor is Mg(2+).

The protein localises to the cytoplasm. The catalysed reaction is isopentenyl diphosphate + dimethylallyl diphosphate = (2E)-geranyl diphosphate + diphosphate. It carries out the reaction isopentenyl diphosphate + (2E)-geranyl diphosphate = (2E,6E)-farnesyl diphosphate + diphosphate. It participates in isoprenoid biosynthesis; farnesyl diphosphate biosynthesis; farnesyl diphosphate from geranyl diphosphate and isopentenyl diphosphate: step 1/1. Its pathway is isoprenoid biosynthesis; geranyl diphosphate biosynthesis; geranyl diphosphate from dimethylallyl diphosphate and isopentenyl diphosphate: step 1/1. With respect to regulation, inhibited by aminobisphosphonate drugs (aBP), such as risedronate and alendronate. Its function is as follows. Key enzyme in isoprenoid biosynthesis which catalyzes the formation of farnesyl diphosphate (FPP), a sterol precursor. Involved in the inhibition of cell growth. The chain is Farnesyl diphosphate synthase (fps) from Dictyostelium discoideum (Social amoeba).